Here is a 226-residue protein sequence, read N- to C-terminus: Cytidylate kinase (226 aa).

ATP is bound at residue 10–18 (GFSSTGKST).

Belongs to the cytidylate kinase family. Type 1 subfamily.

The protein resides in the cytoplasm. The catalysed reaction is CMP + ATP = CDP + ADP. It carries out the reaction dCMP + ATP = dCDP + ADP. The chain is Cytidylate kinase from Flavobacterium psychrophilum (strain ATCC 49511 / DSM 21280 / CIP 103535 / JIP02/86).